Here is a 479-residue protein sequence, read N- to C-terminus: Adenosylhomocysteinase (479 aa).

The substrate site is built by T66, D142, and E203. 204 to 206 (TTT) provides a ligand contact to NAD(+). The substrate site is built by K233 and D237. NAD(+) contacts are provided by residues N238, 267–272 (GYGDVG), E290, N325, 346–348 (IGH), and N394.

Belongs to the adenosylhomocysteinase family. It depends on NAD(+) as a cofactor.

It is found in the cytoplasm. The catalysed reaction is S-adenosyl-L-homocysteine + H2O = L-homocysteine + adenosine. The protein operates within amino-acid biosynthesis; L-homocysteine biosynthesis; L-homocysteine from S-adenosyl-L-homocysteine: step 1/1. May play a key role in the regulation of the intracellular concentration of adenosylhomocysteine. The sequence is that of Adenosylhomocysteinase from Oleidesulfovibrio alaskensis (strain ATCC BAA-1058 / DSM 17464 / G20) (Desulfovibrio alaskensis).